Consider the following 170-residue polypeptide: uncharacterized protein (170 aa).

Transmembrane regions (helical) follow at residues 31 to 51 (ILAVVNGSITIILSIIVFYIF), 58 to 78 (LFLITAGILTVFVFLYGLLLF), and 133 to 153 (IDFIVMIGMITISVIVVMLLF).

It to M.jannaschii MJ0554 and MJ0587.

It is found in the cell membrane. This is an uncharacterized protein from Methanocaldococcus jannaschii (strain ATCC 43067 / DSM 2661 / JAL-1 / JCM 10045 / NBRC 100440) (Methanococcus jannaschii).